Reading from the N-terminus, the 864-residue chain is Protein translocase subunit SecA (864 aa).

ATP is bound by residues Q87, 105–109, and D494; that span reads GEGKT. Positions 809–864 are disordered; sequence AKATELRHKEQPAELSYSGGDEDGAKTPSRRNAPKVGRNDPCPCGSGKKYKKCCGA. The span at 810 to 820 shows a compositional bias: basic and acidic residues; it reads KATELRHKEQP. C850, C852, C861, and C862 together coordinate Zn(2+).

It belongs to the SecA family. As to quaternary structure, monomer and homodimer. Part of the essential Sec protein translocation apparatus which comprises SecA, SecYEG and auxiliary proteins SecDF-YajC and YidC. Zn(2+) serves as cofactor.

Its subcellular location is the cell inner membrane. It localises to the cytoplasm. It carries out the reaction ATP + H2O + cellular proteinSide 1 = ADP + phosphate + cellular proteinSide 2.. Functionally, part of the Sec protein translocase complex. Interacts with the SecYEG preprotein conducting channel. Has a central role in coupling the hydrolysis of ATP to the transfer of proteins into and across the cell membrane, serving as an ATP-driven molecular motor driving the stepwise translocation of polypeptide chains across the membrane. The protein is Protein translocase subunit SecA of Oleidesulfovibrio alaskensis (strain ATCC BAA-1058 / DSM 17464 / G20) (Desulfovibrio alaskensis).